We begin with the raw amino-acid sequence, 453 residues long: Sodium/alanine symporter AgcS (453 aa).

The Extracellular portion of the chain corresponds to 1 to 17 (MDFVSLVNTVNSFVWGP). The chain crosses the membrane as a helical span at residues 18–32 (YMLVLLLGTGIFLTL). Residues 33 to 67 (RLGFMQIHTLPYALKLAFSKHQDETSEGDISHFQA) lie on the Cytoplasmic side of the membrane. A helical transmembrane segment spans residues 68 to 89 (LMTALAATIGTGNIAGVATAYV). T75 is a D-alanine binding site. L-alanine-binding residues include T75 and G79. Residue N80 coordinates D-alanine. The Extracellular portion of the chain corresponds to 90–92 (LGG). Residues 93–111 (PGAIFWMWVTAFFGMATKY) form a helical membrane-spanning segment. Residues 112–148 (AEAVLAIKYRTVDDNGEMAGGPMYFLEKGLPDHGLGK) lie on the Cytoplasmic side of the membrane. Residues 149 to 179 (ILGVAFAFFGAFAAFGIGNMVQTNSVADAVA) traverse the membrane as a helical segment. Q170 provides a ligand contact to D-alanine. An L-alanine-binding site is contributed by Q170. The Extracellular portion of the chain corresponds to 180 to 186 (SNFGVDP). A helical membrane pass occupies residues 187–202 (LITGFVLAIFTAAVIL). The Cytoplasmic portion of the chain corresponds to 203-206 (GGIK). A helical membrane pass occupies residues 207–233 (SIGKATGIIVPFMAVFYILAGLVILAM). Topologically, residues 234-258 (NIGYIIPAFGTIFSSAFNFSAGFGA) are extracellular. The helical transmembrane segment at 259 to 274 (LIGTAIMWGVKRGVFS) threads the bilayer. Residue 273 to 274 (FS) coordinates D-alanine. 273–276 (FSNE) lines the L-alanine pocket. Residues 275 to 300 (NEAGLGSAPIAAAAAKTDHPGRQALV) lie on the Cytoplasmic side of the membrane. The chain crosses the membrane as a helical span at residues 301 to 322 (SMTGTFLDTIVVCTITGLVLTI). Residues 323–350 (AGLKAFPGLTDLTGASLTAASFDALMPM) lie on the Extracellular side of the membrane. Residues 351–378 (GGLIVTIGLVFFAYSTVLGWSYYGEKCF) traverse the membrane as a helical segment. Over 379 to 386 (EYLIGTKG) the chain is Cytoplasmic. A helical transmembrane segment spans residues 387–403 (IRLYRIAFVLVAFWGAT). At 404–408 (ASLPL) the chain is on the extracellular side. A helical transmembrane segment spans residues 409–430 (VWNIADTLNGAMAIPNLIGLLL). Residues 431–453 (LSGVVVSETKAFNEIRKNEAKNA) lie on the Cytoplasmic side of the membrane.

The protein belongs to the alanine or glycine:cation symporter (AGCS) (TC 2.A.25) family.

Its subcellular location is the cell membrane. It catalyses the reaction D-alanine(in) + Na(+)(in) = D-alanine(out) + Na(+)(out). The enzyme catalyses L-alanine(in) + Na(+)(in) = L-alanine(out) + Na(+)(out). The catalysed reaction is glycine(in) + Na(+)(in) = glycine(out) + Na(+)(out). Its function is as follows. Catalyzes the sodium-dependent uptake of extracellular D-alanine and L-alanine. Can also transport glycine. Binds glycine and both enantiomers of alanine, while strictly excluding other amino acids. This is Sodium/alanine symporter AgcS from Methanococcus maripaludis (strain DSM 14266 / JCM 13030 / NBRC 101832 / S2 / LL).